A 145-amino-acid polypeptide reads, in one-letter code: Granulysin (145 aa).

The signal sequence occupies residues 1–22; the sequence is MATWALLLLAAMLLGNPGLVFS. Residues 62–142 enclose the Saposin B-type domain; sequence LGRDYRTCLT…EDLRLCIPST (81 aa). Cystine bridges form between Cys69–Cys132 and Cys96–Cys107.

In terms of processing, a 9 kDa form is produced by proteolytic processing of a 15 kDa protein. In terms of tissue distribution, expressed in natural killer and T-cells.

It is found in the secreted. Antimicrobial protein that kills intracellular pathogens. Active against a broad range of microbes, including Gram-positive and Gram-negative bacteria, fungi, and parasites. Kills Mycobacterium tuberculosis. The polypeptide is Granulysin (GNLY) (Homo sapiens (Human)).